The chain runs to 383 residues: Acetylornithine deacetylase (383 aa).

Zn(2+) is bound at residue His80. Residue Asp82 is part of the active site. Residue Asp112 coordinates Zn(2+). The active site involves Glu144. Glu145, Glu169, and His355 together coordinate Zn(2+).

Belongs to the peptidase M20A family. ArgE subfamily. As to quaternary structure, homodimer. Zn(2+) serves as cofactor. The cofactor is Co(2+). Requires glutathione as cofactor.

It localises to the cytoplasm. It catalyses the reaction N(2)-acetyl-L-ornithine + H2O = L-ornithine + acetate. The protein operates within amino-acid biosynthesis; L-arginine biosynthesis; L-ornithine from N(2)-acetyl-L-ornithine (linear): step 1/1. Functionally, catalyzes the hydrolysis of the amide bond of N(2)-acetylated L-amino acids. Cleaves the acetyl group from N-acetyl-L-ornithine to form L-ornithine, an intermediate in L-arginine biosynthesis pathway, and a branchpoint in the synthesis of polyamines. In Escherichia coli O45:K1 (strain S88 / ExPEC), this protein is Acetylornithine deacetylase.